The following is a 199-amino-acid chain: Phycocyanobilin lyase CpcT (199 aa).

The protein belongs to the CpcT/CpeT biliprotein lyase family.

Catalyzes the site-selective attachment of phycocyanobilin (PCB) to 'Cys-154' of C-phycocyanin subunit beta (CpcB) and to 'Cys-153' of phycoerythrocyanin subunit beta (PecB). Does not have chromophore lyase activity for ApcA1, ApcA2, ApcB, ApcD, ApcF or PecA. The protein is Phycocyanobilin lyase CpcT (cpcT1) of Nostoc sp. (strain PCC 7120 / SAG 25.82 / UTEX 2576).